The following is a 362-amino-acid chain: 2-oxoglutarate-dependent dioxygenase lolO1 (362 aa).

Positions 199–312 constitute a Fe2OG dioxygenase domain; that stretch reads TWNYFLGQPV…RYSLVFFGHL (114 aa). Positions 222, 224, and 280 each coordinate Fe cation. 2-oxoglutarate is bound at residue arginine 303.

It belongs to the iron/ascorbate-dependent oxidoreductase family. Requires Fe(2+) as cofactor.

It participates in alkaloid biosynthesis. Functionally, 2-oxoglutarate-dependent dioxygenase; part of the gene cluster that mediates the biosynthesis of loline alkaloids, potent insecticidal agents composed of a pyrrolizidine ring system and an uncommon ether bridge linking carbons 2 and 7. Lolines are structurally differentiated by the various modifications of the L-amino group and include norloline, loline, N-methylloline, N-acetylloline, N-acetylnorloline, and N-formylloline. The first committed step is the condensation of O-acetyl-L-homoserine (derived from L-aspartic acid) and L-proline, probably catalyzed by the gamma-type pyridoxal 5'-phosphate(PLP)-dependent enzyme lolC, to give the diamino diacid, NACPP. Ensuing cyclization, decarboxylation, and acetylation steps yield 1-exo-acetamidopyrrolizidine (AcAP). LolO is required for installation of the ether bridge upon the pathway intermediate, 1-exo-acetamidopyrrolizidine (AcAP). In sequential 2-oxoglutarate- and O(2)-consuming steps, lolO removes hydrogens from C2 and C7 of AcAP to form both carbon-oxygen bonds in N-acetylnorloline (NANL), the precursor to all other lolines. The enzymes lolD, lolE, lolF and lolT have also been proposed to be involved in the ether-bridge installation. Further processing of the exocyclic moiety of NANL by fungal N-acetamidase (LolN), methyltransferase (LolM), and cytochrome P450 (LolP) enzymes, with occasional involvement of a plant acetyltransferase, generates the other known lolines. LolN transforms NANL to norlonine which is monomethylated and dimethylated to respectively lonine and N-methyllonine (NML) by lolM. LolP catalyzes hydroxylation of the methyl group in N-methylloline (NML) and further oxygenation to N-formylloline (NFL). A plant acetyltransferase is responsible for the acetylation of loline to form N-acetylloline (NAL). LolA might interact with aspartate kinase to prevent feedback inhibition of its activity by these end products and thereby promote production of l-homoserine from l-aspartate. The sequence is that of 2-oxoglutarate-dependent dioxygenase lolO1 from Epichloe uncinata (Endophyte fungus).